The following is a 188-amino-acid chain: Elongation factor P (188 aa).

Lysine 34 is subject to N6-(3,6-diaminohexanoyl)-5-hydroxylysine.

It belongs to the elongation factor P family. Post-translationally, may be beta-lysylated on the epsilon-amino group of Lys-34 by the combined action of EpmA and EpmB, and then hydroxylated on the C5 position of the same residue by EpmC (if this protein is present). Lysylation is critical for the stimulatory effect of EF-P on peptide-bond formation. The lysylation moiety may extend toward the peptidyltransferase center and stabilize the terminal 3-CCA end of the tRNA. Hydroxylation of the C5 position on Lys-34 may allow additional potential stabilizing hydrogen-bond interactions with the P-tRNA.

It is found in the cytoplasm. It participates in protein biosynthesis; polypeptide chain elongation. Involved in peptide bond synthesis. Alleviates ribosome stalling that occurs when 3 or more consecutive Pro residues or the sequence PPG is present in a protein, possibly by augmenting the peptidyl transferase activity of the ribosome. Modification of Lys-34 is required for alleviation. The chain is Elongation factor P from Haemophilus influenzae (strain PittGG).